Consider the following 683-residue polypeptide: WD repeat-containing protein 48 homolog (683 aa).

WD repeat units follow at residues 27-82 (SNRS…PVQY), 88-130 (QHTD…FIDC), 133-167 (THKD…INAN), 176-215 (GCKD…KIMK), 218-257 (GHTD…CIAT), 260-299 (AHEE…KSQL), and 302-343 (KEEA…QLSI). The tract at residues 341 to 364 (LSIGGDEDGPSTSNANHSVSASSS) is disordered. Residues 351–364 (STSNANHSVSASSS) are compositionally biased toward low complexity. Residues 389 to 428 (PGAPAIKKHAMLSDKRHVLTRDSDGNVALYDVLAARKIKD) form a WD 8 repeat.

It belongs to the WD repeat WDR48 family. Interacts with usp-46; the interaction increases the catalytic activity of usp-46 in the presence of wdr-20. Expressed in several head neurons and cells in the tail including the anal depressor cell.

Together with wdr-20, binds to and stimulates the activity of the deubiquitinating enzyme usp-46, leading to deubiquitination and stabilization of the glr-1 glutamate receptor. The sequence is that of WD repeat-containing protein 48 homolog (wdr-48) from Caenorhabditis elegans.